Here is a 145-residue protein sequence, read N- to C-terminus: Large ribosomal subunit protein mL43 (145 aa).

It belongs to the mitochondrion-specific ribosomal protein mL43 family. Component of the mitochondrial large ribosomal subunit (mt-LSU). Mature yeast 74S mitochondrial ribosomes consist of a small (37S) and a large (54S) subunit. The 37S small subunit contains a 15S ribosomal RNA (15S mt-rRNA) and at least 32 different proteins. The 54S large subunit contains a 21S rRNA (21S mt-rRNA) and at least 45 different proteins.

It localises to the mitochondrion. In terms of biological role, component of the mitochondrial ribosome (mitoribosome), a dedicated translation machinery responsible for the synthesis of mitochondrial genome-encoded proteins, including at least some of the essential transmembrane subunits of the mitochondrial respiratory chain. The mitoribosomes are attached to the mitochondrial inner membrane and translation products are cotranslationally integrated into the membrane. Also has an extraribosomal function, being essential for mitochondrial genome integrity. May interact with MHR1 to take part in the mtDNA repair mechanism. This chain is Large ribosomal subunit protein mL43 (mrpl51), found in Schizosaccharomyces pombe (strain 972 / ATCC 24843) (Fission yeast).